The primary structure comprises 444 residues: Killer cell immunoglobulin-like receptor 3DL1 (444 aa).

The first 21 residues, 1–21 (MSLMVVSMACVGLFLVQRAGP), serve as a signal peptide directing secretion. Topologically, residues 22–340 (HMGGQDKPFL…SKSGNPRHLH (319 aa)) are extracellular. Ig-like C2-type domains follow at residues 42–102 (GGHV…HPHS), 137–202 (GERV…VTHT), and 237–300 (GESV…FRHS). 3 disulfide bridges follow: Cys49/Cys95, Cys144/Cys195, and Cys244/Cys293. Residues Asn92, Asn179, and Asn273 are each glycosylated (N-linked (GlcNAc...) asparagine). The segment at 315-334 (VTGNPSSSWPSPTEPSSKSG) is disordered. Over residues 319–333 (PSSSWPSPTEPSSKS) the composition is skewed to low complexity. The chain crosses the membrane as a helical span at residues 341–360 (ILIGTSVVIILFILLLFFLL). At 361 to 444 (HLWCSNKKNA…KPRSKVVSCP (84 aa)) the chain is on the cytoplasmic side. Disordered stretches follow at residues 375–394 (QEPA…QDPE) and 409–444 (RKIT…VSCP).

This sequence belongs to the immunoglobulin superfamily.

The protein localises to the cell membrane. Receptor on natural killer (NK) cells for HLA Bw4 allele. Inhibits the activity of NK cells thus preventing cell lysis. In Homo sapiens (Human), this protein is Killer cell immunoglobulin-like receptor 3DL1.